Here is a 208-residue protein sequence, read N- to C-terminus: ATP synthase subunit beta, chloroplastic (208 aa).

Belongs to the ATPase alpha/beta chains family. F-type ATPases have 2 components, CF(1) - the catalytic core - and CF(0) - the membrane proton channel. CF(1) has five subunits: alpha(3), beta(3), gamma(1), delta(1), epsilon(1). CF(0) has four main subunits: a(1), b(1), b'(1) and c(9-12).

It localises to the plastid. The protein resides in the chloroplast thylakoid membrane. The enzyme catalyses ATP + H2O + 4 H(+)(in) = ADP + phosphate + 5 H(+)(out). In terms of biological role, produces ATP from ADP in the presence of a proton gradient across the membrane. The catalytic sites are hosted primarily by the beta subunits. This is ATP synthase subunit beta, chloroplastic (atpB) from Hypolepis hostilis (Fern).